The sequence spans 206 residues: Large ribosomal subunit protein uL4 (206 aa).

The disordered stretch occupies residues Q45–S78. The segment covering H58–G70 has biased composition (basic residues).

This sequence belongs to the universal ribosomal protein uL4 family. As to quaternary structure, part of the 50S ribosomal subunit.

One of the primary rRNA binding proteins, this protein initially binds near the 5'-end of the 23S rRNA. It is important during the early stages of 50S assembly. It makes multiple contacts with different domains of the 23S rRNA in the assembled 50S subunit and ribosome. In terms of biological role, forms part of the polypeptide exit tunnel. The protein is Large ribosomal subunit protein uL4 of Burkholderia ambifaria (strain MC40-6).